Reading from the N-terminus, the 247-residue chain is Uridylate kinase (247 aa).

21 to 24 (KVSG) contributes to the ATP binding site. UMP is bound at residue glycine 63. Residues glycine 64 and arginine 68 each coordinate ATP. UMP contacts are provided by residues aspartate 83 and 144–151 (TGNPFCTT). The ATP site is built by threonine 171, glutamine 172, tyrosine 177, and aspartate 180.

The protein belongs to the UMP kinase family. Homohexamer.

The protein localises to the cytoplasm. It carries out the reaction UMP + ATP = UDP + ADP. The protein operates within pyrimidine metabolism; CTP biosynthesis via de novo pathway; UDP from UMP (UMPK route): step 1/1. With respect to regulation, inhibited by UTP. Its function is as follows. Catalyzes the reversible phosphorylation of UMP to UDP. This Rickettsia rickettsii (strain Sheila Smith) protein is Uridylate kinase.